The primary structure comprises 256 residues: NAP1-related protein 1 (256 aa).

Positions 23–64 (IDAELVLSIEKLQEIQDDLEKINEKASDEVLEVEQKYNVIRK) form a coiled coil. A disordered region spans residues 220–256 (LTYFNNDADEEDFDGDDDGDEEGEEDDDDEEEEDGEE). Residues 226–256 (DADEEDFDGDDDGDEEGEEDDDDEEEEDGEE) show a composition bias toward acidic residues.

Belongs to the nucleosome assembly protein (NAP) family. In terms of assembly, can form homomeric and heteromeric protein complexes with NRP2. Binds histones H2A and H2B and associates with chromatin in vivo. In terms of tissue distribution, ubiquitous.

The protein resides in the cytoplasm. It is found in the nucleus. Acts as a histone H2A/H2B chaperone in nucleosome assembly, playing a critical role for the correct expression of genes involved in root proliferation and patterning. Required with NRP2 for the maintenance of cell proliferation and differentiation in postembryonic root growth. Involved in both intramolecular and intermolecular somatic homologous recombination. This Arabidopsis thaliana (Mouse-ear cress) protein is NAP1-related protein 1 (NRP1).